The primary structure comprises 360 residues: Phospho-N-acetylmuramoyl-pentapeptide-transferase (360 aa).

The next 10 helical transmembrane spans lie at 21-41 (YLSFRAIVSILTALGISLWMG), 73-93 (TMGGVMILAAITITVLLWADL), 94-114 (TNPYVWAVLAVLLGYGAVGFV), 132-152 (WKYFWQSAIALVVAFALYAHG), 168-188 (VMPQLGLMYIVLTYFVIVGTS), 199-219 (GLAIMPTVLVAAGFAAIAWAT), 239-259 (LVVVCTAMVGAGLGFLWFNTY), 263-283 (VFMGDVGALALGGALGTIAVL), 288-308 (FVLVIMGGVFVMETLSVILQV), and 338-358 (VIVRFWVISIVLVLIGLATLK).

This sequence belongs to the glycosyltransferase 4 family. MraY subfamily. Mg(2+) serves as cofactor.

Its subcellular location is the cell inner membrane. It carries out the reaction UDP-N-acetyl-alpha-D-muramoyl-L-alanyl-gamma-D-glutamyl-meso-2,6-diaminopimeloyl-D-alanyl-D-alanine + di-trans,octa-cis-undecaprenyl phosphate = di-trans,octa-cis-undecaprenyl diphospho-N-acetyl-alpha-D-muramoyl-L-alanyl-D-glutamyl-meso-2,6-diaminopimeloyl-D-alanyl-D-alanine + UMP. It functions in the pathway cell wall biogenesis; peptidoglycan biosynthesis. Its function is as follows. Catalyzes the initial step of the lipid cycle reactions in the biosynthesis of the cell wall peptidoglycan: transfers peptidoglycan precursor phospho-MurNAc-pentapeptide from UDP-MurNAc-pentapeptide onto the lipid carrier undecaprenyl phosphate, yielding undecaprenyl-pyrophosphoryl-MurNAc-pentapeptide, known as lipid I. This chain is Phospho-N-acetylmuramoyl-pentapeptide-transferase, found in Vibrio cholerae serotype O1 (strain ATCC 39541 / Classical Ogawa 395 / O395).